The sequence spans 92 residues: PqqA binding protein (92 aa).

Belongs to the PqqD family. As to quaternary structure, monomer. Interacts with PqqE.

It participates in cofactor biosynthesis; pyrroloquinoline quinone biosynthesis. Its function is as follows. Functions as a PqqA binding protein and presents PqqA to PqqE, in the pyrroloquinoline quinone (PQQ) biosynthetic pathway. In Xanthomonas campestris pv. campestris (strain B100), this protein is PqqA binding protein.